We begin with the raw amino-acid sequence, 629 residues long: Protein EDS1B (629 aa).

Catalysis depends on Ser-123, which acts as the Nucleophile. Catalysis depends on charge relay system residues Asp-187 and His-317.

In terms of assembly, interacts (via N-terminus) with PAD4 and SAG101. Part of a nuclear complex made of EDS1, PAD4 and SAG101, that can be redirected to the cytoplasm in the presence of an extranuclear form of EDS1. Does not interact with itself or with EDS1.

The protein resides in the nucleus. Its subcellular location is the cytoplasm. Its function is as follows. Acts as a second functional copy of EDS1. Can mediate HRT-mediated resistance to turnip crinkle virus. In Arabidopsis thaliana (Mouse-ear cress), this protein is Protein EDS1B (EDS1B).